The primary structure comprises 2785 residues: Testis-expressed protein 15 (2785 aa).

Low complexity predominate over residues 262-274 (SSSFPSSLSNAFS). Disordered stretches follow at residues 262–331 (SSSF…PSSD), 596–620 (EQRD…SEKQ), 661–683 (NGKP…APND), 904–924 (TEST…GMCS), 943–1064 (VQES…QGRI), 2276–2458 (NRQE…TNDK), 2470–2511 (DIDA…LVPD), and 2571–2601 (TQPI…GNSA). Positions 275–286 (DVRKQKHSEEQV) are enriched in basic and acidic residues. The segment covering 314–331 (TCSNDSQGHFSQESPSSD) has biased composition (polar residues). Residues 596–611 (EQRDDKNPNEAKEHNT) show a composition bias toward basic and acidic residues. 2 stretches are compositionally biased toward polar residues: residues 962–989 (HNTH…TVMN) and 1021–1031 (HASSSRGQNIA). A compositionally biased stretch (basic and acidic residues) spans 1033 to 1042 (KDLREHETHE). 8 stretches are compositionally biased toward polar residues: residues 1049 to 1064 (SHGS…QGRI), 2291 to 2314 (DSSQ…NISD), 2327 to 2338 (EVSQGKGNTDTV), 2353 to 2387 (NIQT…SISA), 2394 to 2415 (RQSS…CTPK), 2431 to 2454 (ASLT…SVAE), 2491 to 2502 (DHTQISPSNLTA), and 2585 to 2601 (DAPN…GNSA).

This sequence belongs to the TEX15 family. In terms of assembly, interacts with PIWIL4. Interacts with PIWIL2. In terms of tissue distribution, detected in testis and ovary, and at lower levels in lung and brain.

The protein localises to the cytoplasm. The protein resides in the nucleus. In terms of biological role, required during spermatogenesis for normal chromosome synapsis and meiotic recombination in germ cells. Necessary for formation of DMC1 and RAD51 foci on meiotic chromosomes, suggesting a specific role in DNA double-stranded break repair. Essential executor of PIWIL4-piRNA pathway directed transposon DNA methylation and silencing in the male embryonic germ cells. PIWIL4-piRNA binds to nascent transposon transcripts and interacts with TEX15, which may in turn recruit the epigenetic silencing machinery to the transposon loci. Not required for piRNA biosynthesis. This is Testis-expressed protein 15 from Mus musculus (Mouse).